Reading from the N-terminus, the 192-residue chain is MITISEAAQAHFVKLLSDQPEGTHIRVFVISPGTAQAECGVSYCPPDAVEADDTEIEFNGFNAMVDEKSAPFLEEATIDFVTDQLGSQLTLKAPNAKMRKVSDDASLSERIEYVIQSEINPQLASHGGNIMLVEITEDGIAVLQFGGGCNGCSMVDVTLKDGIEKQLLDMFPGELSGVKDVTEHQHGEHSYQ.

2 residues coordinate [4Fe-4S] cluster: C149 and C152.

The protein belongs to the NfuA family. As to quaternary structure, homodimer. Requires [4Fe-4S] cluster as cofactor.

Its function is as follows. Involved in iron-sulfur cluster biogenesis. Binds a 4Fe-4S cluster, can transfer this cluster to apoproteins, and thereby intervenes in the maturation of Fe/S proteins. Could also act as a scaffold/chaperone for damaged Fe/S proteins. The chain is Fe/S biogenesis protein NfuA from Shewanella pealeana (strain ATCC 700345 / ANG-SQ1).